We begin with the raw amino-acid sequence, 193 residues long: Capsid protein (193 aa).

The protein localises to the virion. In Apple chlorotic leaf spot virus (isolate apple) (ACLSV), this protein is Capsid protein.